Here is a 103-residue protein sequence, read N- to C-terminus: Small ribosomal subunit protein bS18c (103 aa).

It belongs to the bacterial ribosomal protein bS18 family. As to quaternary structure, part of the 30S ribosomal subunit.

Its subcellular location is the plastid. It localises to the chloroplast. The protein is Small ribosomal subunit protein bS18c (rps18) of Chlorella vulgaris (Green alga).